The following is a 458-amino-acid chain: Sphingomyelinase DDB_G0288017 (458 aa).

Residues 91-111 (NKKAKSPPPPSSLKQQNLHNN) are disordered. Glutamate 135 contributes to the Mg(2+) binding site. The active-site Proton acceptor is histidine 447.

Belongs to the neutral sphingomyelinase family. Mg(2+) is required as a cofactor.

It carries out the reaction a sphingomyelin + H2O = phosphocholine + an N-acylsphing-4-enine + H(+). It participates in lipid metabolism; sphingolipid metabolism. In terms of biological role, catalyzes the hydrolysis of sphingomyelin to form ceramide and phosphocholine. The chain is Sphingomyelinase DDB_G0288017 from Dictyostelium discoideum (Social amoeba).